The chain runs to 341 residues: tRNA N6-adenosine threonylcarbamoyltransferase (341 aa).

Fe cation contacts are provided by His112 and His116. Substrate is bound by residues 134-138, Asp167, Gly180, and Asn279; that span reads LASGG. Asp307 is a binding site for Fe cation.

Belongs to the KAE1 / TsaD family. The cofactor is Fe(2+).

The protein resides in the cytoplasm. It catalyses the reaction L-threonylcarbamoyladenylate + adenosine(37) in tRNA = N(6)-L-threonylcarbamoyladenosine(37) in tRNA + AMP + H(+). Required for the formation of a threonylcarbamoyl group on adenosine at position 37 (t(6)A37) in tRNAs that read codons beginning with adenine. Is involved in the transfer of the threonylcarbamoyl moiety of threonylcarbamoyl-AMP (TC-AMP) to the N6 group of A37, together with TsaE and TsaB. TsaD likely plays a direct catalytic role in this reaction. This chain is tRNA N6-adenosine threonylcarbamoyltransferase, found in Rickettsia bellii (strain OSU 85-389).